The sequence spans 1008 residues: MSSRQDKEKSVNVQVLLRCRPFSDDEVRSNAPQVITCNDYQREVAVTQTIAGKQIDRVFTFDKVFGPTAKQRDLYDQAIIPIVNEVLEGFNCTIFAYGQTGTGKTYTMEGECRRAKSGPKGQLPADAGVIPRAVKQIFDTLESQNTEYSVKVTFLELYNEEITDLLAPEEISKAALEERQKKPLPLMEDGKGGVLVRGLEEEIVTNASEIFSLLERGSAKRRTAETLLNKQSSRSHSLFSITIHIKEATPEGEELIKCGKLNLVDLAGSENISRSGAREGRAREAGEINKSLLTLGRVITALVEHLGHVPYRDSKLTRLLRDSLGGRTKTCIIATVSPSVHCLEETLSTLDYAHRAKSIKNRPEVNQKMMKSTLIKDLYGEIDRLKAEVYAAREKVGVYIPKDRYQQEENERKAMADQIEQMTTSLEANQKQINDLQEKYDSELQHSADLSKKLEATEKCLDHTSNLLSTTKEDLKQAQYNLKEKDYIISEQRKAENALIQQACLLRSDLEKSNRENAALYSKIARGDKLNAANRSVVNSFQADLASKLDILSTTLATSIDQQNKHLKSVENLCKSCVDSHDTATSEIKKKILASKALYMSHMEAFQNVVLLHKANSNSTLEDISSLSAASCCSLDQLLACVEGEAQKIFGDIQNLLADHRSEVAHFTQELRESFRISLDRTKDMSSFILGLFDKYVEETSKLQSHSNHTHEAQVKSLEDFQKAYEEQSKSEEQKLLADITSLVSKHVTRQRELVGGRLNSLGDAARGNKAFLDEHTSAMEVVTKDAKRKWEMFAEQAENDCKVGSNFSAAKHCRMETILQECACTVDTAAQQWKASHATVNDLCRKQIAEVEALVRSAIETNEQHEAEIASSRATAEEHASNSSKDLLQDVDNMLQEARNSSSRVVSTVEAHLGESQHLQESHSSHTAGINTHADNAFQSSYKDYEPTGETPVRSEPEVPSKDAIESLRAMPMESLMDEFRENHPYEPSKDRRPSLIPRSPLATINN.

Positions 12-359 constitute a Kinesin motor domain; it reads NVQVLLRCRP…LDYAHRAKSI (348 aa). ATP is bound at residue 98–105; sequence GQTGTGKT. A coiled-coil region spans residues 402-459; that stretch reads KDRYQQEENERKAMADQIEQMTTSLEANQKQINDLQEKYDSELQHSADLSKKLEATEK. Disordered stretches follow at residues 910–931, 943–962, and 975–1008; these read VEAH…TAGI, YKDY…EVPS, and ESLM…TINN. Over residues 913–925 the composition is skewed to basic and acidic residues; the sequence is HLGESQHLQESHS. Basic and acidic residues predominate over residues 979-995; the sequence is DEFRENHPYEPSKDRRP.

The protein belongs to the TRAFAC class myosin-kinesin ATPase superfamily. Kinesin family. KIN-5/BimC subfamily.

The protein resides in the cytoplasm. It is found in the cytoskeleton. It localises to the spindle. Functionally, responsible for microtubule translocation. May be important for the organization of phragmoplast-specific arrays of microtubules. Plays an essential role in stabilizing the mitotic spindle. Required during mitotic cytokinesis. This is Kinesin-like protein KIN-5C from Oryza sativa subsp. japonica (Rice).